The primary structure comprises 151 residues: MMSAMTILVLNGPNLSRLGKREPEVYGRQTLDDINRELAASFPELSFDFFQTESEGALLEKLFNCEDKGGYRGVVLNAGALTHYSIALRDAISAITIPVVEVHLSNIYAREEFRRKSVISEVCAGVISGFGANSYHLGVRALLGMTSLEPD.

Tyrosine 26 functions as the Proton acceptor in the catalytic mechanism. Substrate-binding residues include asparagine 77, histidine 83, and aspartate 90. Residue histidine 103 is the Proton donor of the active site. Residues 104 to 105 (LS) and arginine 114 contribute to the substrate site.

Belongs to the type-II 3-dehydroquinase family. In terms of assembly, homododecamer.

The catalysed reaction is 3-dehydroquinate = 3-dehydroshikimate + H2O. Its pathway is metabolic intermediate biosynthesis; chorismate biosynthesis; chorismate from D-erythrose 4-phosphate and phosphoenolpyruvate: step 3/7. Functionally, catalyzes a trans-dehydration via an enolate intermediate. In Pelodictyon phaeoclathratiforme (strain DSM 5477 / BU-1), this protein is 3-dehydroquinate dehydratase.